A 562-amino-acid polypeptide reads, in one-letter code: NAD-dependent malic enzyme (562 aa).

The Proton donor role is filled by Tyr-101. Residue Arg-154 coordinates NAD(+). Residue Lys-172 is the Proton acceptor of the active site. A divalent metal cation contacts are provided by Glu-243, Asp-244, and Asp-267. NAD(+) is bound by residues Asp-267 and Asn-415.

The protein belongs to the malic enzymes family. As to quaternary structure, homotetramer. It depends on Mg(2+) as a cofactor. Mn(2+) serves as cofactor.

It catalyses the reaction (S)-malate + NAD(+) = pyruvate + CO2 + NADH. It carries out the reaction oxaloacetate + H(+) = pyruvate + CO2. This chain is NAD-dependent malic enzyme, found in Shewanella denitrificans (strain OS217 / ATCC BAA-1090 / DSM 15013).